The primary structure comprises 976 residues: Peptidylglycine alpha-amidating monooxygenase (976 aa).

Residues 1–25 (MAGRARSGLLLLLLGLLALQSSCLA) form the signal peptide. The peptidylglycine alpha-hydroxylating monooxygenase stretch occupies residues 1-497 (MAGRARSGLL…EGPWEPEPSG (497 aa)). Residues 26-35 (FRSPLSVFKR) constitute a propeptide that is removed on maturation. Residues 36-866 (FKETTRSFSN…QKLSTEPGSG (831 aa)) lie on the Intragranular side of the membrane. Cystine bridges form between Cys-47–Cys-186, Cys-81–Cys-126, Cys-114–Cys-131, Cys-227–Cys-334, and Cys-293–Cys-315. Positions 107 and 108 each coordinate Cu(2+). Cu(2+) is bound by residues His-172, His-242, His-244, and Met-314. The peptidyl-alpha-hydroxyglycine alpha-amidating lyase stretch occupies residues 498–820 (DFHVEEELDW…LTEKMEHRSV (323 aa)). 4 NHL repeats span residues 501–544 (VEEE…NSFD), 570–611 (AEIL…LDPH), 620–665 (LGRS…FSPS), and 673–717 (GEES…FKTD). Val-520 is a binding site for Ca(2+). Arg-533 contributes to the a protein binding site. Zn(2+) is bound at residue His-585. Position 587 (Leu-587) interacts with Ca(2+). Cys-634 and Cys-655 are disulfide-bonded. An a protein-binding site is contributed by Tyr-654. His-690 provides a ligand contact to Zn(2+). A disulfide bridge links Cys-702 with Cys-713. Arg-706 lines the a protein pocket. N-linked (GlcNAc...) asparagine glycosylation occurs at Asn-765. An NHL 5 repeat occupies 769–812 (GEIIDVFKPVRKHFDMPHDIVASEDGTVYIGDAHTNTVWKFTLT). Val-774 is modified (sulfotyrosine). Zn(2+) is bound at residue His-786. Residue Asp-787 participates in Ca(2+) binding. A Sulfotyrosine modification is found at Glu-792. Residues 867–890 (VSVVLITTLLVIPVLVLLAIVMFI) traverse the membrane as a helical segment. Residues 891-976 (RWKKSRAFGD…APLPKPAPSS (86 aa)) lie on the Cytoplasmic side of the membrane. A phosphoserine mark is found at Ser-921, Ser-932, and Ser-945. The segment at 928–945 (NFFASRKGYSRKGFDRVS) is interaction with RASSF9. Residues 940–976 (GFDRVSTEGSDQEKDEDDGTESEEEYSAPLPKPAPSS) are disordered. The residue at position 946 (Thr-946) is a Phosphothreonine. A Phosphoserine modification is found at Ser-949. Positions 952 to 965 (EKDEDDGTESEEEY) are enriched in acidic residues. Residue Thr-959 is modified to Phosphothreonine. Ser-961 carries the phosphoserine modification.

It in the C-terminal section; belongs to the peptidyl-alpha-hydroxyglycine alpha-amidating lyase family. The protein in the N-terminal section; belongs to the copper type II ascorbate-dependent monooxygenase family. Monomer. Interacts with RASSF9. Requires Zn(2+) as cofactor. The cofactor is Cu(2+).

The protein localises to the cytoplasmic vesicle. It is found in the secretory vesicle membrane. It localises to the membrane. Its subcellular location is the secreted. It catalyses the reaction a [peptide]-C-terminal glycine + 2 L-ascorbate + O2 = a [peptide]-C-terminal (2S)-2-hydroxyglycine + 2 monodehydro-L-ascorbate radical + H2O. It carries out the reaction a [peptide]-C-terminal (2S)-2-hydroxyglycine = a [peptide]-C-terminal amide + glyoxylate. The catalysed reaction is N-dodecanoylglycine + 2 L-ascorbate + O2 = N-dodecanoyl-(2S)-hydroxyglycine + 2 monodehydro-L-ascorbate radical + H2O. The enzyme catalyses N-dodecanoyl-(2S)-hydroxyglycine = dodecanamide + glyoxylate. It catalyses the reaction N-(9Z,12Z,15Z)-octadecatrienoylglycine + 2 L-ascorbate + O2 = N-(9Z,12Z,15Z)-octadecatrienoyl-(2S)-hydroxyglycine + 2 monodehydro-L-ascorbate radical + H2O. It carries out the reaction N-(9Z,12Z,15Z)-octadecatrienoyl-(2S)-hydroxyglycine = (9Z,12Z,15Z)-octadecatrienamide + glyoxylate. The catalysed reaction is N-(9Z-octadecenoyl)glycine + 2 L-ascorbate + O2 = N-(9Z-octadecenoyl)-(2S)-hydroxyglycine + 2 monodehydro-L-ascorbate radical + H2O. The enzyme catalyses N-(9Z-octadecenoyl)-(2S)-hydroxyglycine = (9Z)-octadecenamide + glyoxylate. It catalyses the reaction N-tetradecanoylglycine + 2 L-ascorbate + O2 = N-tetradecanoyl-(2S)-hydroxyglycine + 2 monodehydro-L-ascorbate radical + H2O. It carries out the reaction N-tetradecanoyl-(2S)-hydroxyglycine = tetradecamide + glyoxylate. The catalysed reaction is N-decanoylglycine + 2 L-ascorbate + O2 = N-decanoyl-(2S)-hydroxyglycine + 2 monodehydro-L-ascorbate radical + H2O. The enzyme catalyses N-decanoyl-(2S)-hydroxyglycine = decanamide + glyoxylate. It catalyses the reaction N-octanoylglycine + 2 L-ascorbate + O2 = N-octanoyl-(2S)-hydroxyglycine + 2 monodehydro-L-ascorbate radical + H2O. It carries out the reaction N-octanoyl-(2S)-hydroxyglycine = octanamide + glyoxylate. PAM activity is inhibited by EDTA, phenylglyoxal and diethyl pyrocarbonate. PAL activity is stimulated by cadmium and inhibited by mercury. Bifunctional enzyme that catalyzes amidation of the C-terminus of proteins. Alpha-amidation is present at the C-terminus of many endocrine hormones and neuropeptides and is required for their activity. C-terminal amidation also takes place in response to protein fragmentation triggered by oxidative stress, promoting degradation of amidated protein fragments by the proteasome. Alpha-amidation involves two sequential reactions, both of which are catalyzed by separate catalytic domains of the enzyme. The first step, catalyzed by peptidyl alpha-hydroxylating monooxygenase (PHM) domain, is the copper-, ascorbate-, and O2- dependent stereospecific hydroxylation (with S stereochemistry) at the alpha-carbon (C-alpha) of the C-terminal glycine of the peptidylglycine substrate. The second step, catalyzed by the peptidylglycine amidoglycolate lyase (PAL) domain, is the zinc-dependent cleavage of the N-C-alpha bond, producing the alpha-amidated peptide and glyoxylate. Similarly, catalyzes the two-step conversion of an N-fatty acylglycine to a primary fatty acid amide and glyoxylate. This Rattus norvegicus (Rat) protein is Peptidylglycine alpha-amidating monooxygenase.